The primary structure comprises 255 residues: Small ribosomal subunit protein uS2 (255 aa).

This sequence belongs to the universal ribosomal protein uS2 family.

This chain is Small ribosomal subunit protein uS2, found in Streptococcus pyogenes serotype M49 (strain NZ131).